The following is a 411-amino-acid chain: Tyrosine--tRNA ligase (411 aa).

Residue Y34 coordinates L-tyrosine. The 'HIGH' region signature appears at 39-48 (CTATSLHIGS). L-tyrosine is bound by residues Y171 and Q175. The 'KMSKS' region motif lies at 231–235 (KMGKT). K234 lines the ATP pocket. One can recognise an S4 RNA-binding domain in the interval 345-411 (ISAYELFYEA…GKKRHILVRV (67 aa)).

The protein belongs to the class-I aminoacyl-tRNA synthetase family. TyrS type 1 subfamily. In terms of assembly, homodimer.

The protein resides in the cytoplasm. It carries out the reaction tRNA(Tyr) + L-tyrosine + ATP = L-tyrosyl-tRNA(Tyr) + AMP + diphosphate + H(+). Functionally, catalyzes the attachment of tyrosine to tRNA(Tyr) in a two-step reaction: tyrosine is first activated by ATP to form Tyr-AMP and then transferred to the acceptor end of tRNA(Tyr). The sequence is that of Tyrosine--tRNA ligase from Rickettsia rickettsii (strain Sheila Smith).